The chain runs to 42 residues: Large ribosomal subunit protein bL36 (42 aa).

The protein belongs to the bacterial ribosomal protein bL36 family.

The protein is Large ribosomal subunit protein bL36 of Ehrlichia ruminantium (strain Gardel).